The chain runs to 198 residues: Syndecan-4 (198 aa).

Residues 1-18 (MAPARLFALLLLFVGGVA) form the signal peptide. Over 19-145 (ESIRETEVID…QGSNIFERTE (127 aa)) the chain is Extracellular. S39, S61, and S63 each carry an O-linked (Xyl...) (glycosaminoglycan) serine glycan. O-linked (Xyl...) (chondroitin sulfate) serine glycosylation occurs at S95. A helical transmembrane segment spans residues 146–170 (VLAALIVGGIVGILFAVFLILLLMY). At 171-198 (RMKKKDEGSYDLGKKPIYKKAPTNEFYA) the chain is on the cytoplasmic side.

This sequence belongs to the syndecan proteoglycan family. Homodimer. Interacts with CDCP1 and SDCBP. Interacts (via its cytoplasmic domain) with GIPC (via its PDZ domain). Interacts (via its cytoplasmic domain) with NUDT16L1. Interacts with DNM2; this interaction is markedly enhanced at focal ahesion site upon induction of focal adhesions and stress-fiber formation. Shedding is enhanced by a number of factors such as heparanase, thrombin or EGF. Also by stress and wound healing. PMA-mediated shedding is inhibited by TIMP3. Post-translationally, O-glycosylated; contains both chondroitin sulfate and heparan sulfate. Ser-39, Ser-61 and Ser-63 can all be modified by either chondroitin sulfate or heparan sulfate, and the protein exists in forms that contain only chondroitin sulfate, only heparan sulfate and both chondroitin sulfate and heparan sulfate.

The protein resides in the membrane. Its subcellular location is the secreted. Cell surface proteoglycan which regulates exosome biogenesis in concert with SDCBP and PDCD6IP. The protein is Syndecan-4 of Pongo abelii (Sumatran orangutan).